A 1299-amino-acid chain; its full sequence is MSDTEENPLEESRESGEMEEEKEEKKEEEEEEEEGEKEKEEEEEEEKGKEEEKEEEKEEGKEEEKKEEEEEKGKKEEEEEEEEEGKGKEEEKEEEKEEEEKEEEKEKEEEEEEEGKGKEEEEEGKEEEEEEKEEEEKEEEKEEEEEEEEEKEEYNPSFEEDALQQSLTEGSLSWEESQEDGEGLEEWVEKEEQREGEEVRGEEESEVRGREEEEGWEEEKSGEEEKSEESERSKERGGEEEGQEKEEAEHEGEREEGREEEEKEKSVEREEEEEEEDTETTETKAGRAKEEKKEKQNKTALVDNIVISHEPPRSSSSLADSPEVSQIYKDNSMKVDDTEEASQKPEDILAQGKDEARLSLEERRKLFQSKGLSAEESLVSVSTEDTLFQKEEDSKVYPLSMTWSFGWNSSLPVYYMREDRRVILYTCAHTAIMYDVVRNTQYHLQGHPNIISCLCVSEDRRWIATADEGPDCLIIIWDSFTGIPVHTIFDSCPEGNGMRSIAITRDSKFLATISDSATQKVCIWKWTLAVETPACTLELPKEYGFQDNLVFNPANNKELVSNSKTQAIYYCWFEDKGILAHSAPVLTEKTFNKLVGKFSQSVFHLKLPQVLSATKEGKLVVWDIHYPSSTSSSAISAFPFIKPRKLVHLQKEAITVLMTIDSYIVTGDIKGNIKFYDHTLSVVNWYSNFKLGAIRTLSFSKTIPSLPTEKSNLPTDCTLRGDLFVVRNFIIGTFDATVYHMTVDGTKLEKLFVEPRDAVYAVSCHPYQPLIAVGSVCGMIKVWDFEKKVYLFSRTFEKGLGVQCLTYNPEGALLGAGFTEGTVYILDAMSLENESPEPFKYSKSSVSHCCFSHDSNYMATADVNFTVAVYMVVVKNGQRVWEYLARLRSHQNSIQSLLFGVHLDSNEPRLLSLGKDRFLIEYNLVKSCKDHLDVLDVHRTDQGNYPTCMIWYPPLTKELFLLICNSGYKVKLFNATTKMCRKTLLGPAYGSPIEHAQVLPVKSTLELQKRYLVFINKDKVGLQILPVDGNPHKTCAIVCHPNGVAGMALSYDGRFAFTAGGQDRSVVQWKINLGALEAAVSLGGEDLTPFYGLVSGGREGKFYRELEDYFYYSQIRSQGIDTMETRQVSEHICLSELPFVMRAIGFYPSEEKIEDMFNEIKFSEYVETGKLIDKINLPDFLKVYLNHRPPFGNTMDGIQNSFNVLGYTNSEGKKAIRREDFLNLLLTKGEHMTEEEMIDCFSTLFGLTPEGWKSEPAATCINGPEICLQKELPEEITAEIFTTEILGLTLSDSSEQLIQ.

Residues 1–351 (MSDTEENPLE…SQKPEDILAQ (351 aa)) form a disordered region. Acidic residues-rich tracts occupy residues 17–45 (EMEE…EEEE), 91–162 (EKEE…EEDA), and 176–189 (ESQE…EWVE). The span at 190-199 (KEEQREGEEV) shows a compositional bias: basic and acidic residues. Over residues 212-228 (EEEGWEEEKSGEEEKSE) the composition is skewed to acidic residues. The segment covering 229–257 (ESERSKERGGEEEGQEKEEAEHEGEREEG) has biased composition (basic and acidic residues). Residues 269-280 (REEEEEEEDTET) show a composition bias toward acidic residues. Composition is skewed to basic and acidic residues over residues 281-297 (TETK…EKQN) and 331-351 (NSMK…ILAQ). WD repeat units lie at residues 484–526 (PVHT…IWKW), 534–574 (ACTL…CWFE), 585–624 (VLTE…VWDI), 643–678 (PRKL…FYDH), 681–741 (SVVN…VYHM), 745–785 (GTKL…VWDF), 791–828 (LFSR…ILDA), 838–874 (PFKY…MVVV), 881–924 (WEYL…EYNL), 935–975 (LDVH…LFNA), 981–1027 (RKTL…ILPV), 1033–1071 (KTCA…QWKI), 1109–1149 (YFYY…FYPS), and 1169–1209 (GKLI…GYTN).

The protein resides in the cytoplasm. It localises to the cytoskeleton. The protein localises to the cilium axoneme. It is found in the cell projection. Its subcellular location is the cilium. The protein resides in the flagellum. In terms of biological role, involved in spermatozoa motility. May also regulate cilium motility through its role in the assembly of the axonemal radial spokes. The polypeptide is Cilia- and flagella-associated protein 251 (Mus musculus (Mouse)).